Here is a 333-residue protein sequence, read N- to C-terminus: MGAVWSALLVGGGLAGALILWLLRGDSGAPGKDGGAEPLKDAPPGEAAAPGGGPGGGGSGGLSPEPSDRELVSKAEHLRESNGHLISESKDLGNLTEAQRLQNVGNAREYVPVGKVPDTHSRANSETSRNQSPESRVGEWRLPKGHETAVKVAGSVAEKLPSSSPLMDRAEAASLAQSAGHEDWEVVSRHSSWGSVGLGGSLEASRLSLNQGMDESRNSLVGGGWEVDGKVVSVKPRQVSIQFKVHYSTSTDVQFIAVTGDHESLGGWNTYIPLHYCKDGLWSHSVFLPADTVVEWKFVLVENKEVTRWEECSNRRLQTGHEDKVVHGWWGIH.

Topologically, residues methionine 1–serine 6 are extracellular. Residues alanine 7–leucine 23 traverse the membrane as a helical segment. The Cytoplasmic segment spans residues arginine 24–histidine 333. Disordered stretches follow at residues glycine 31–serine 73 and asparagine 106–glutamate 139. Residues proline 50–glycine 61 are compositionally biased toward gly residues. Serine 67 is subject to Phosphoserine. Polar residues predominate over residues asparagine 124–glutamate 134. 2 positions are modified to phosphoserine: serine 135 and serine 162. Residues histidine 181–valine 187 carry the LIR motif. Phosphoserine is present on residues serine 191, serine 192, serine 201, serine 205, serine 208, serine 216, and serine 219. Residues serine 233–isoleucine 332 enclose the CBM20 domain.

In terms of assembly, interacts with the ATG8 family proteins GABARAP and GABARAPL1. Interacts with several glycogen-associated proteins, such as GYS2 (liver glycogen synthase), GDE (glycogen debranching enzyme), GBE1 (glycogen branching enzyme 1) and EPM2A (Laforin). Ubiquitinated, which leads to proteasomal degradation.

The protein resides in the preautophagosomal structure membrane. The protein localises to the endoplasmic reticulum membrane. It localises to the cell membrane. Its subcellular location is the sarcolemma. It is found in the T-tubule. Acts as a cargo receptor for glycogen. Delivers its cargo to an autophagic pathway called glycophagy, resulting in the transport of glycogen to lysosomes. In Rattus norvegicus (Rat), this protein is Starch-binding domain-containing protein 1.